Consider the following 440-residue polypeptide: Putative purine permease YwdJ (440 aa).

The next 13 helical transmembrane spans lie at 3-23 (LVLGALQWTAFIIAAAIVVPV), 39-59 (LIQSTFFVLGIAAVIQCLKGH), 67-87 (PAGLWWGVYTIYAGLTGTVFA), 96-116 (LQGALLVSAVCFFLLSVFKVI), 130-150 (VYLLLLVMQLSQPIIKGILGI), 156-176 (GVDGLVFGLALVVIAAAFIMT), 188-208 (ILLALFGGWVLFAAAGAAKPI), 231-251 (GLIITSIFITILLIVNMLASM), 283-303 (LLSGLTGAIAPVPISGAAGFI), 314-334 (FMLGSILVIVISVIPFFMNTF), 341-361 (VGFAVNFVVFSAMGGLAFAEF), 374-394 (SIIGISLLTGVGIMFVPETAL), and 399-419 (PVFISLLSNGLVLGTLAAIAA).

It belongs to the nucleobase:cation symporter-2 (NCS2) (TC 2.A.40) family.

It is found in the cell membrane. In Bacillus subtilis (strain 168), this protein is Putative purine permease YwdJ (ywdJ).